The primary structure comprises 535 residues: Beta-glucosidase 20 (535 aa).

Residues 1-24 (MGRFHKFPLLGLVLFLGLTGSLIA) form the signal peptide. Gln56 and His159 together coordinate a beta-D-glucoside. The N-linked (GlcNAc...) asparagine glycan is linked to Asn187. Position 204-205 (204-205 (NE)) interacts with a beta-D-glucoside. Glu205 (proton donor) is an active-site residue. The cysteines at positions 224 and 235 are disulfide-linked. A beta-D-glucoside-binding residues include Tyr351 and Glu424. The active-site Nucleophile is Glu424. The N-linked (GlcNAc...) asparagine glycan is linked to Asn468. A beta-D-glucoside is bound by residues Trp475, 482–483 (EW), and Phe491. An N-linked (GlcNAc...) asparagine glycan is attached at Asn501. The Prevents secretion from ER motif lies at 532 to 535 (HDEL).

This sequence belongs to the glycosyl hydrolase 1 family.

The protein resides in the endoplasmic reticulum lumen. The enzyme catalyses Hydrolysis of terminal, non-reducing beta-D-glucosyl residues with release of beta-D-glucose.. The chain is Beta-glucosidase 20 from Arabidopsis thaliana (Mouse-ear cress).